A 315-amino-acid polypeptide reads, in one-letter code: Isoaspartyl peptidase/L-asparaginase 1 (315 aa).

Position 169 is a phosphoserine (S169). T183 functions as the Nucleophile in the catalytic mechanism. Substrate contacts are provided by residues 211–214 and 233–236; these read RIGD and TGKG.

The protein belongs to the Ntn-hydrolase family. Heterotetramer of two alpha and two beta chains arranged as a dimer of alpha/beta heterodimers. Post-translationally, cleaved into an alpha and beta chain by autocatalysis; this activates the enzyme. The N-terminal residue of the beta subunit is responsible for the nucleophile hydrolase activity.

It catalyses the reaction Cleavage of a beta-linked Asp residue from the N-terminus of a polypeptide.. Functionally, acts in asparagine catabolism but also in the final steps of protein and degradation via hydrolysis of a range of isoaspartyl dipeptides. The affinity for Asn and at least 4 isoaspartyl dipeptides (L-beta-Asp-Ala, L-beta-Asp-Gly, L-beta-Asp-Leu, L-beta-Asp-Phe) is quite low, KM being greater than 4.0 mM. The enzyme is inactive on alpha-aspartyl dipeptides. The chain is Isoaspartyl peptidase/L-asparaginase 1 from Arabidopsis thaliana (Mouse-ear cress).